We begin with the raw amino-acid sequence, 74 residues long: Protein krueppel (74 aa).

C2H2-type zinc fingers lie at residues 1–4 (ERTH), 10–32 (FECS…MRLH), 38–60 (YHCT…LRVH), and 66–74 (YACELCASR).

It belongs to the krueppel C2H2-type zinc-finger protein family.

It localises to the nucleus. Functionally, krueppel is a gap class segmentation protein. The protein is Protein krueppel (Kr) of Euscelis plebejus (Leafhopper).